The following is a 186-amino-acid chain: Adenylate kinase (186 aa).

ATP is bound at residue 12-17 (GAGKGT). Residues 32–61 (STGDLLRAEVNAQSPLGKEAALIMNKGELV) form an NMP region. AMP is bound by residues T33, R38, 59 to 61 (ELV), 86 to 89 (GFPR), and Q93. The tract at residues 127 to 133 (SRGRSDD) is LID. An ATP-binding site is contributed by R128. The AMP site is built by R130 and R141. G169 is an ATP binding site.

This sequence belongs to the adenylate kinase family. In terms of assembly, monomer.

It is found in the cytoplasm. The enzyme catalyses AMP + ATP = 2 ADP. The protein operates within purine metabolism; AMP biosynthesis via salvage pathway; AMP from ADP: step 1/1. Its function is as follows. Catalyzes the reversible transfer of the terminal phosphate group between ATP and AMP. Plays an important role in cellular energy homeostasis and in adenine nucleotide metabolism. The sequence is that of Adenylate kinase from Prochlorococcus marinus (strain MIT 9211).